We begin with the raw amino-acid sequence, 1526 residues long: uncharacterized protein (1526 aa).

WD repeat units follow at residues Cys-334–Ser-376, Lys-862–Thr-901, Gly-904–Lys-945, Gly-946–Ile-985, Gly-988–Ile-1027, Gly-1030–Thr-1069, Gly-1072–Thr-1111, Gly-1114–Thr-1153, Gly-1156–Ile-1195, Gly-1198–Thr-1237, Gly-1240–Thr-1279, Gly-1282–Thr-1321, Gly-1324–Thr-1363, Gly-1366–Thr-1405, Gly-1408–Thr-1447, and Gly-1450–Lys-1491. Residues Met-823 to Lys-862 form the Pentapeptide repeat domain.

This is an uncharacterized protein from Nostoc sp. (strain PCC 7120 / SAG 25.82 / UTEX 2576).